The primary structure comprises 392 residues: Probable inactive serine/threonine-protein kinase DDB_G0280855 (392 aa).

In terms of domain architecture, Protein kinase spans 46–349 (ITKKTIYACD…IERIIQHPYF (304 aa)). Residues 52-60 (YACDINGTM) and Lys-75 each bind ATP.

The protein belongs to the protein kinase superfamily. CMGC Ser/Thr protein kinase family. MAP kinase subfamily.

The sequence is that of Probable inactive serine/threonine-protein kinase DDB_G0280855 from Dictyostelium discoideum (Social amoeba).